Reading from the N-terminus, the 146-residue chain is Mediator of RNA polymerase II transcription subunit 10 (146 aa).

The protein belongs to the Mediator complex subunit 10 family. In terms of assembly, component of the Mediator complex.

It is found in the nucleus. Functionally, component of the Mediator complex, a coactivator involved in the regulated transcription of nearly all RNA polymerase II-dependent genes. Mediator functions as a bridge to convey information from gene-specific regulatory proteins to the basal RNA polymerase II transcription machinery. Mediator is recruited to promoters by direct interactions with regulatory proteins and serves as a scaffold for the assembly of a functional preinitiation complex with RNA polymerase II and the general transcription factors. The protein is Mediator of RNA polymerase II transcription subunit 10 (NUT2) of Scheffersomyces stipitis (strain ATCC 58785 / CBS 6054 / NBRC 10063 / NRRL Y-11545) (Yeast).